A 138-amino-acid polypeptide reads, in one-letter code: Large ribosomal subunit protein bL17 (138 aa).

Belongs to the bacterial ribosomal protein bL17 family. As to quaternary structure, part of the 50S ribosomal subunit. Contacts protein L32.

The chain is Large ribosomal subunit protein bL17 from Methylorubrum extorquens (strain CM4 / NCIMB 13688) (Methylobacterium extorquens).